A 317-amino-acid chain; its full sequence is MTDKLTSLRQITTVVADTGDIAAMKLYQPQDATTNPSIILNAAQIPEYRKLIDEAITWAREQSSDHAQQIVDATDKLAVNIGLEILKLIPGRISTEVDARLSYDTVASVAKAKRLIKLYNEAGISNDRILIKLASTWQGIRAAEQLEKEGINCNLTLLFSFAQARACAEAGVFLISPFVGRILDWYKANGDQKEFAPSEDPGVVSVTEIYQYYKKHGYKTVVMGASFRNLGEIIELAGCDRLTIAPSLLKELAESEGPVERKLAYTGEIQAKPAPLTEAEFYWQHNQDPMAVDKLADGIRKFAIDQGKLEKMISDLL.

Lys-132 serves as the catalytic Schiff-base intermediate with substrate.

The protein belongs to the transaldolase family. Type 1 subfamily. As to quaternary structure, homodimer.

It localises to the cytoplasm. It carries out the reaction D-sedoheptulose 7-phosphate + D-glyceraldehyde 3-phosphate = D-erythrose 4-phosphate + beta-D-fructose 6-phosphate. Its pathway is carbohydrate degradation; pentose phosphate pathway; D-glyceraldehyde 3-phosphate and beta-D-fructose 6-phosphate from D-ribose 5-phosphate and D-xylulose 5-phosphate (non-oxidative stage): step 2/3. Transaldolase is important for the balance of metabolites in the pentose-phosphate pathway. In Yersinia pseudotuberculosis serotype O:3 (strain YPIII), this protein is Transaldolase.